A 299-amino-acid polypeptide reads, in one-letter code: ATP phosphoribosyltransferase (299 aa).

It belongs to the ATP phosphoribosyltransferase family. Long subfamily. In terms of assembly, equilibrium between an active dimeric form, an inactive hexameric form and higher aggregates. Interconversion between the various forms is largely reversible and is influenced by the natural substrates and inhibitors of the enzyme. It depends on Mg(2+) as a cofactor.

It localises to the cytoplasm. The catalysed reaction is 1-(5-phospho-beta-D-ribosyl)-ATP + diphosphate = 5-phospho-alpha-D-ribose 1-diphosphate + ATP. It functions in the pathway amino-acid biosynthesis; L-histidine biosynthesis; L-histidine from 5-phospho-alpha-D-ribose 1-diphosphate: step 1/9. Feedback inhibited by histidine. Functionally, catalyzes the condensation of ATP and 5-phosphoribose 1-diphosphate to form N'-(5'-phosphoribosyl)-ATP (PR-ATP). Has a crucial role in the pathway because the rate of histidine biosynthesis seems to be controlled primarily by regulation of HisG enzymatic activity. This Blochmanniella pennsylvanica (strain BPEN) protein is ATP phosphoribosyltransferase.